Reading from the N-terminus, the 172-residue chain is NADH-quinone oxidoreductase subunit B 1 (172 aa).

The [4Fe-4S] cluster site is built by cysteine 42, cysteine 43, cysteine 107, and cysteine 137.

Belongs to the complex I 20 kDa subunit family. NDH-1 is composed of 14 different subunits. Subunits NuoB, C, D, E, F, and G constitute the peripheral sector of the complex. The cofactor is [4Fe-4S] cluster.

The protein resides in the cell inner membrane. The enzyme catalyses a quinone + NADH + 5 H(+)(in) = a quinol + NAD(+) + 4 H(+)(out). Functionally, NDH-1 shuttles electrons from NADH, via FMN and iron-sulfur (Fe-S) centers, to quinones in the respiratory chain. Couples the redox reaction to proton translocation (for every two electrons transferred, four hydrogen ions are translocated across the cytoplasmic membrane), and thus conserves the redox energy in a proton gradient. The sequence is that of NADH-quinone oxidoreductase subunit B 1 from Anaeromyxobacter sp. (strain Fw109-5).